Here is a 344-residue protein sequence, read N- to C-terminus: MDVGSCNNHYFYDVDMKEDFYRCIAPSEDIWKKFELVPGFPLSPGGCPGGGGTDWGAELMDLGWESPMKLTGLSSVVLLRDCMWSGFSTRERLEKVIHERLTTASPRATNPQKPVADHENSEPGVNSIEQNANPLVVPTPVPEKVPNSSGSESTSDSEDDEIDVVTIEKRKSYGGRQPVTITVRADPTATKLFHISIHQQQHNYAARLPPEPNSMSPQPNFHSPIKEEPGEVTSPPALQQCSSPMPGSPLASGSSDSEDIVKKKNHNYLERKRRNDLRSRFLALREEVPSLTRSTKTPKVVVLSKATEFLKGLVIQEQQLTAEKFKLWSRHQQLLRRISHLKGR.

Disordered regions lie at residues 100–162 (RLTT…DDEI) and 209–261 (PPEP…EDIV). 3 stretches are compositionally biased toward polar residues: residues 102 to 112 (TTASPRATNPQ), 123 to 133 (PGVNSIEQNAN), and 236 to 255 (PALQ…SGSS). Positions 261–313 (VKKKNHNYLERKRRNDLRSRFLALREEVPSLTRSTKTPKVVVLSKATEFLKGL) constitute a bHLH domain. The tract at residues 313–341 (LVIQEQQLTAEKFKLWSRHQQLLRRISHL) is leucine-zipper.

In terms of assembly, efficient DNA binding requires dimerization with another bHLH protein. Binds DNA as a heterodimer with MAX. In terms of tissue distribution, high levels in oocytes, modest levels in kidney and low levels in spleen.

It localises to the nucleus. This is Protein L-Myc-1-A (mycl1-a) from Xenopus laevis (African clawed frog).